A 334-amino-acid polypeptide reads, in one-letter code: Large ribosomal subunit protein uL3 (334 aa).

Residues Met1–Arg10 show a composition bias toward basic residues. Residues Met1 to Arg20 are disordered.

Belongs to the universal ribosomal protein uL3 family. As to quaternary structure, part of the 50S ribosomal subunit. Forms a cluster with proteins L14 and L24e.

In terms of biological role, one of the primary rRNA binding proteins, it binds directly near the 3'-end of the 23S rRNA, where it nucleates assembly of the 50S subunit. The chain is Large ribosomal subunit protein uL3 from Methanococcus maripaludis (strain C6 / ATCC BAA-1332).